Reading from the N-terminus, the 411-residue chain is Calmodulin-binding receptor-like cytoplasmic kinase 2 (411 aa).

2 disordered regions span residues 1-44 (MPSR…DTTT) and 66-99 (SNYI…YGNA). Composition is skewed to low complexity over residues 16 to 44 (TTSS…DTTT) and 66 to 95 (SNYI…VQRS). Thr-108 carries the post-translational modification Phosphothreonine. The region spanning 119-398 (FSPSFRIGQG…MKKCSEILWG (280 aa)) is the Protein kinase domain. ATP contacts are provided by residues 125 to 133 (IGQGGFGTV) and Lys-147. Residues 134 to 159 (YKVKLRDGKTFAVKRAKKSMHDDRQG) form a caM-binding region. Asp-247 (proton acceptor) is an active-site residue. Ser-251 and Ser-283 each carry phosphoserine. 2 positions are modified to phosphothreonine: Thr-284 and Thr-289. Tyr-297 is subject to Phosphotyrosine.

This sequence belongs to the protein kinase superfamily. Ser/Thr protein kinase family. Interacts with calmodulin (CaM) in a Ca(2+)-dependent manner.

It is found in the cytoplasm. It catalyses the reaction L-seryl-[protein] + ATP = O-phospho-L-seryl-[protein] + ADP + H(+). The enzyme catalyses L-threonyl-[protein] + ATP = O-phospho-L-threonyl-[protein] + ADP + H(+). The protein is Calmodulin-binding receptor-like cytoplasmic kinase 2 (CRCK2) of Arabidopsis thaliana (Mouse-ear cress).